The primary structure comprises 167 residues: Gametocyte-specific factor 1 homolog (167 aa).

CHHC U11-48K-type zinc fingers lie at residues 1–28 and 34–61; these read MVYCPYNKEHKMLRKKLQQHILKCRVIY and LMVCPFNSSHLIPEPQFFQHTQSCEDRN. Residues cysteine 4, histidine 10, histidine 20, cysteine 24, cysteine 37, histidine 43, histidine 53, and cysteine 57 each contribute to the Zn(2+) site. Residues 128-161 show a composition bias toward basic and acidic residues; sequence EKRRHFGEDYEEEKKPRKAKARADLRPTPYEHRR. Residues 128 to 167 are disordered; it reads EKRRHFGEDYEEEKKPRKAKARADLRPTPYEHRRPYSRRQ.

The protein belongs to the UPF0224 (FAM112) family. Interacts with piwi.

Its subcellular location is the nucleus. Functionally, acts via the piwi-interacting RNA (piRNA) pathway which mediates the repression of transposable elements during meiosis by forming complexes composed of piRNAs and piwi proteins and governs the methylation and subsequent repression of transposons. Required for repression of transposons and neighboring genes in ovarian somatic and germline cells. The chain is Gametocyte-specific factor 1 homolog from Drosophila melanogaster (Fruit fly).